A 1003-amino-acid polypeptide reads, in one-letter code: Calcium-transporting ATPase sarcoplasmic/endoplasmic reticulum type (1003 aa).

Over methionine 1–aspartate 59 the chain is Cytoplasmic. Residues leucine 60 to phenylalanine 78 form a helical membrane-spanning segment. Residues glutamate 79–threonine 89 are Extracellular-facing. Residues alanine 90–tryptophan 110 traverse the membrane as a helical segment. Residues glutamine 111–glutamine 262 are Cytoplasmic-facing. The chain crosses the membrane as a helical span at residues leucine 263–phenylalanine 282. Over asparagine 283–lysine 300 the chain is Extracellular. Residues isoleucine 301 to isoleucine 318 form a helical membrane-spanning segment. Residues threonine 319–glutamate 775 are Cytoplasmic-facing. Aspartate 354 serves as the catalytic 4-aspartylphosphate intermediate. ATP is bound at residue lysine 519. A helical membrane pass occupies residues valine 776 to valine 799. The Extracellular segment spans residues asparagine 800 to arginine 840. A helical transmembrane segment spans residues tyrosine 841–serine 863. The Cytoplasmic portion of the chain corresponds to proline 864–proline 898. A helical transmembrane segment spans residues histidine 899 to isoleucine 917. Residues asparagine 918 to asparagine 934 lie on the Extracellular side of the membrane. The chain crosses the membrane as a helical span at residues isoleucine 935 to valine 954. The Cytoplasmic portion of the chain corresponds to glutamate 955–lysine 1003.

Belongs to the cation transport ATPase (P-type) (TC 3.A.3) family.

It localises to the sarcoplasmic reticulum membrane. It carries out the reaction Ca(2+)(in) + ATP + H2O = Ca(2+)(out) + ADP + phosphate + H(+). In terms of biological role, this magnesium-dependent enzyme catalyzes the hydrolysis of ATP coupled with the transport of the calcium. This chain is Calcium-transporting ATPase sarcoplasmic/endoplasmic reticulum type, found in Artemia franciscana (Brine shrimp).